The following is a 69-amino-acid chain: Large ribosomal subunit protein eL38z/eL38y (69 aa).

It belongs to the eukaryotic ribosomal protein eL38 family.

The polypeptide is Large ribosomal subunit protein eL38z/eL38y (RPL38A) (Arabidopsis thaliana (Mouse-ear cress)).